Here is a 382-residue protein sequence, read N- to C-terminus: uncharacterized protein (382 aa).

Helical transmembrane passes span 14 to 34 (GLLL…LWLA), 45 to 65 (VVSS…GYVI), 79 to 99 (FIFA…SWLA), 102 to 122 (FVAG…LMCS), 131 to 151 (LLAA…LLVS), 157 to 177 (LMSV…PLLF), 204 to 224 (LGVN…GLMP), 235 to 255 (ASIG…QWPI), 270 to 290 (VQVF…AMAP), 291 to 311 (ALFI…AWAC), 325 to 345 (ALLL…AMLM), and 348 to 368 (FSDN…LLML).

Belongs to the major facilitator superfamily. YcaD (TC 2.A.1.26) family.

It localises to the cell inner membrane. This is an uncharacterized protein from Escherichia coli O45:K1 (strain S88 / ExPEC).